The primary structure comprises 414 residues: Argininosuccinate synthase (414 aa).

12–20 contributes to the ATP binding site; the sequence is AYSGGLDTS. L-citrulline contacts are provided by Tyr90 and Ser95. Gly120 serves as a coordination point for ATP. Positions 122, 126, and 127 each coordinate L-aspartate. Asn126 serves as a coordination point for L-citrulline. 5 residues coordinate L-citrulline: Arg130, Ser179, Ser188, Glu264, and Tyr276.

This sequence belongs to the argininosuccinate synthase family. Type 1 subfamily. In terms of assembly, homotetramer.

The protein localises to the cytoplasm. The catalysed reaction is L-citrulline + L-aspartate + ATP = 2-(N(omega)-L-arginino)succinate + AMP + diphosphate + H(+). It functions in the pathway amino-acid biosynthesis; L-arginine biosynthesis; L-arginine from L-ornithine and carbamoyl phosphate: step 2/3. This Alkaliphilus metalliredigens (strain QYMF) protein is Argininosuccinate synthase.